Consider the following 1077-residue polypeptide: Carbamoyl phosphate synthase large chain (1077 aa).

The tract at residues 2-403 (PKRTDIKSIL…SLQKALRGLE (402 aa)) is carboxyphosphate synthetic domain. ATP-binding residues include Arg129, Arg169, Gly175, Gly176, Glu208, Leu210, Glu215, Gly241, Ile242, His243, Gln285, and Glu299. In terms of domain architecture, ATP-grasp 1 spans 133–328 (DIAMKKIGLD…IAKIAAKLAV (196 aa)). Mg(2+)-binding residues include Gln285, Glu299, and Asn301. Mn(2+) is bound by residues Gln285, Glu299, and Asn301. Residues 404–553 (VGATGFDPKV…YSTYEEECES (150 aa)) are oligomerization domain. The carbamoyl phosphate synthetic domain stretch occupies residues 554–936 (NPTSDRPKVM…AFSKAMLGSQ (383 aa)). An ATP-grasp 2 domain is found at 679 to 870 (QQAVNRLGLK…LAKIAARVMV (192 aa)). The ATP site is built by Arg715, Arg754, Leu756, Glu761, Gly786, Val787, His788, Ser789, Gln829, and Glu841. 3 residues coordinate Mg(2+): Gln829, Glu841, and Asn843. Mn(2+)-binding residues include Gln829, Glu841, and Asn843. Residues 937–1077 (SGMKKSGRAL…MHAKIKNMKA (141 aa)) form the MGS-like domain. Residues 937 to 1077 (SGMKKSGRAL…MHAKIKNMKA (141 aa)) are allosteric domain.

The protein belongs to the CarB family. In terms of assembly, composed of two chains; the small (or glutamine) chain promotes the hydrolysis of glutamine to ammonia, which is used by the large (or ammonia) chain to synthesize carbamoyl phosphate. Tetramer of heterodimers (alpha,beta)4. Requires Mg(2+) as cofactor. Mn(2+) is required as a cofactor.

It catalyses the reaction hydrogencarbonate + L-glutamine + 2 ATP + H2O = carbamoyl phosphate + L-glutamate + 2 ADP + phosphate + 2 H(+). The catalysed reaction is hydrogencarbonate + NH4(+) + 2 ATP = carbamoyl phosphate + 2 ADP + phosphate + 2 H(+). It functions in the pathway amino-acid biosynthesis; L-arginine biosynthesis; carbamoyl phosphate from bicarbonate: step 1/1. Its pathway is pyrimidine metabolism; UMP biosynthesis via de novo pathway; (S)-dihydroorotate from bicarbonate: step 1/3. Large subunit of the glutamine-dependent carbamoyl phosphate synthetase (CPSase). CPSase catalyzes the formation of carbamoyl phosphate from the ammonia moiety of glutamine, carbonate, and phosphate donated by ATP, constituting the first step of 2 biosynthetic pathways, one leading to arginine and/or urea and the other to pyrimidine nucleotides. The large subunit (synthetase) binds the substrates ammonia (free or transferred from glutamine from the small subunit), hydrogencarbonate and ATP and carries out an ATP-coupled ligase reaction, activating hydrogencarbonate by forming carboxy phosphate which reacts with ammonia to form carbamoyl phosphate. The polypeptide is Carbamoyl phosphate synthase large chain (Yersinia pestis).